The chain runs to 125 residues: DNA-directed RNA polymerase II subunit RPB9 (125 aa).

Position 1 is an N-acetylmethionine (M1). Residues C17, C20, C39, C42, C86, C89, C114, and C119 each contribute to the Zn(2+) site. The C4-type zinc-finger motif lies at 17-42 (CQECNNMLYPKEDKENRILLYACRNC). A TFIIS-type zinc finger spans residues 82-124 (EDHPCQKCGHKEAVFFQSHSARAEDAMRLYYVCTAPHCGHRWT).

The protein belongs to the archaeal RpoM/eukaryotic RPA12/RPB9/RPC11 RNA polymerase family. As to quaternary structure, component of the RNA polymerase II (Pol II) core complex consisting of 12 subunits: a ten-subunit catalytic core composed of POLR2A/RPB1, POLR2B/RPB2, POLR2C/RPB3, POLR2I/RPB9, POLR2J/RPB11, POLR2E/RPABC1, POLR2F/RPABC2, POLR2H/RPABC3, POLR2K/RPABC4 and POLR2L/RPABC5 and a mobile stalk composed of two subunits POLR2D/RPB4 and POLR2G/RPB7, protruding from the core and functioning primarily in transcription initiation. Part of Pol II(G) complex, in which Pol II core associates with an additional subunit POLR2M; unlike conventional Pol II, Pol II(G) functions as a transcriptional repressor. Part of TBP-based Pol II pre-initiation complex (PIC), in which Pol II core assembles with general transcription factors and other specific initiation factors including GTF2E1, GTF2E2, GTF2F1, GTF2F2, TCEA1, ERCC2, ERCC3, GTF2H2, GTF2H3, GTF2H4, GTF2H5, GTF2A1, GTF2A2, GTF2B and TBP; this large multi-subunit PIC complex mediates DNA unwinding and targets Pol II core to the transcription start site where the first phosphodiester bond forms.

The protein localises to the nucleus. It localises to the nucleolus. In terms of biological role, DNA-dependent RNA polymerase catalyzes the transcription of DNA into RNA using the four ribonucleoside triphosphates as substrates. Component of RNA polymerase II which synthesizes mRNA precursors and many functional non-coding RNAs. Pol II is the central component of the basal RNA polymerase II transcription machinery. It is composed of mobile elements that move relative to each other. POLR2I/RPB9 is part of the upper jaw surrounding the central large cleft and thought to grab the incoming DNA template. This Bos taurus (Bovine) protein is DNA-directed RNA polymerase II subunit RPB9 (POLR2I).